A 689-amino-acid polypeptide reads, in one-letter code: Choline transporter-like 1 (689 aa).

A helical membrane pass occupies residues 23-43 (IFWLVVYILFWIALLVIAVFS). Residue N134 is glycosylated (N-linked (GlcNAc...) asparagine). Transmembrane regions (helical) follow at residues 199–219 (FSDI…SLIF) and 233–255 (IISW…VLWW). N-linked (GlcNAc...) asparagine glycosylation occurs at N279. 2 helical membrane-spanning segments follow: residues 283–303 (IYVL…VIYY) and 333–353 (VLAF…IVCL). 2 N-linked (GlcNAc...) asparagine glycosylation sites follow: N375 and N389. A run of 4 helical transmembrane segments spans residues 412–432 (IYII…QLVI), 461–481 (LGSV…RLIL), 562–582 (LVLF…SILM), and 591–611 (FYMA…HIVL).

This sequence belongs to the CTL (choline transporter-like) family.

Its subcellular location is the membrane. The polypeptide is Choline transporter-like 1 (Aedes aegypti (Yellowfever mosquito)).